The sequence spans 239 residues: Small ribosomal subunit protein uS3c (239 aa).

One can recognise a KH type-2 domain in the interval 43–139 (IKNYIQKNRK…RLNISIEKVK (97 aa)). The interval 50-80 (NRKKGSNRKIESDSSSEVITHNRKTDSGSSS) is disordered.

Belongs to the universal ribosomal protein uS3 family. In terms of assembly, part of the 30S ribosomal subunit.

It localises to the plastid. The protein resides in the chloroplast. The chain is Small ribosomal subunit protein uS3c (rps3) from Agrostis stolonifera (Creeping bentgrass).